We begin with the raw amino-acid sequence, 505 residues long: Lysine--tRNA ligase, heat inducible (505 aa).

2 positions are modified to N6-acetyllysine: lysine 114 and lysine 156. Residues glutamate 415 and glutamate 422 each contribute to the Mg(2+) site.

The protein belongs to the class-II aminoacyl-tRNA synthetase family. As to quaternary structure, homodimer. Mg(2+) serves as cofactor.

The protein localises to the cytoplasm. The enzyme catalyses tRNA(Lys) + L-lysine + ATP = L-lysyl-tRNA(Lys) + AMP + diphosphate. This Escherichia coli O157:H7 protein is Lysine--tRNA ligase, heat inducible (lysU).